The chain runs to 287 residues: 4,4'-diapophytoene synthase (287 aa).

Residues 18 to 21 (HSKS), Tyr-41, and Arg-45 each bind (2E,6E)-farnesyl diphosphate. Residues Asp-48 and Asp-52 each coordinate Mg(2+). Gln-165 contacts (2E,6E)-farnesyl diphosphate. Asn-168 serves as a coordination point for Mg(2+). Residue Arg-171 participates in (2E,6E)-farnesyl diphosphate binding. Residue Asp-172 participates in Mg(2+) binding. Tyr-248 contributes to the (2E,6E)-farnesyl diphosphate binding site.

Belongs to the phytoene/squalene synthase family. CrtM subfamily. It depends on Mg(2+) as a cofactor.

It carries out the reaction 2 (2E,6E)-farnesyl diphosphate = 15-cis-4,4'-diapophytoene + 2 diphosphate. It participates in carotenoid biosynthesis; staphyloxanthin biosynthesis; staphyloxanthin from farnesyl diphosphate: step 1/5. Its function is as follows. Involved in the biosynthesis of the yellow-orange carotenoid staphyloxanthin, which plays a role in the virulence via its protective function against oxidative stress. Catalyzes the head-to-head condensation of two molecules of farnesyl diphosphate (FPP) into the colorless C(30) carotenoid 4,4'-diapophytoene (dehydrosqualene). The protein is 4,4'-diapophytoene synthase of Staphylococcus aureus.